The following is an 89-amino-acid chain: UPF0335 protein CCNA_03428 (89 aa).

Belongs to the UPF0335 family.

The protein is UPF0335 protein CCNA_03428 of Caulobacter vibrioides (strain NA1000 / CB15N) (Caulobacter crescentus).